Here is a 380-residue protein sequence, read N- to C-terminus: Cytochrome b (380 aa).

The next 4 helical transmembrane spans lie at 34-54, 78-99, 114-134, and 179-199; these read FGSL…LLAM, WLIR…FLHI, WNTG…GYVL, and FFAL…THLM. The heme b site is built by His84 and His98. Heme b-binding residues include His183 and His197. His202 provides a ligand contact to a ubiquinone. Transmembrane regions (helical) follow at residues 227–247, 289–309, 321–341, and 348–368; these read LKDI…ALFS, LGGV…PFLH, LSQA…WVGS, and FIII…SLLP.

This sequence belongs to the cytochrome b family. As to quaternary structure, the cytochrome bc1 complex contains 11 subunits: 3 respiratory subunits (MT-CYB, CYC1 and UQCRFS1), 2 core proteins (UQCRC1 and UQCRC2) and 6 low-molecular weight proteins (UQCRH/QCR6, UQCRB/QCR7, UQCRQ/QCR8, UQCR10/QCR9, UQCR11/QCR10 and a cleavage product of UQCRFS1). This cytochrome bc1 complex then forms a dimer. Heme b is required as a cofactor.

Its subcellular location is the mitochondrion inner membrane. Functionally, component of the ubiquinol-cytochrome c reductase complex (complex III or cytochrome b-c1 complex) that is part of the mitochondrial respiratory chain. The b-c1 complex mediates electron transfer from ubiquinol to cytochrome c. Contributes to the generation of a proton gradient across the mitochondrial membrane that is then used for ATP synthesis. The chain is Cytochrome b (MT-CYB) from Crossoptilon crossoptilon (White-eared pheasant).